A 236-amino-acid chain; its full sequence is Endonuclease NucS (236 aa).

It belongs to the NucS endonuclease family.

It localises to the cytoplasm. Functionally, cleaves both 3' and 5' ssDNA extremities of branched DNA structures. This chain is Endonuclease NucS, found in Saccharolobus solfataricus (strain ATCC 35092 / DSM 1617 / JCM 11322 / P2) (Sulfolobus solfataricus).